A 677-amino-acid chain; its full sequence is Electrogenic aspartate/glutamate antiporter SLC25A12, mitochondrial (677 aa).

At Ala-2 the chain carries N-acetylalanine. A regulatory N-terminal domain region spans residues 2 to 294; the sequence is AVKVHTTKRG…TLADIERIAP (293 aa). The Mitochondrial intermembrane portion of the chain corresponds to 2-329; that stretch reads AVKVHTTKRG…WLQIAESAYR (328 aa). 4 EF-hand domains span residues 40-85, 86-121, 122-156, and 157-192; these read VQRY…SVLC, APDS…TIIH, HHIP…FLQE, and LQLE…IRSH. Ca(2+) is bound by residues Asp-65, Thr-67, Asp-69, Leu-71, and Glu-76. The interval 295–310 is linker loop domain; that stretch reads LAEGALPYNLAELQRQ. A carrier domain region spans residues 320-612; it reads WLQIAESAYR…RWFYIDFGGL (293 aa). 3 Solcar repeats span residues 324 to 416, 424 to 508, and 516 to 604; these read AESA…VRDK, IPLP…CKLL, and VGGI…LQRW. A helical membrane pass occupies residues 330-347; it reads FTLGSVAGAVGATAVYPI. Topologically, residues 348–390 are mitochondrial matrix; that stretch reads DLVKTRMQNQRGTGSVVGELMYKNSFDCFKKVLRYEGFFGLYR. Residues 391 to 410 traverse the membrane as a helical segment; the sequence is GLIPQLIGVAPEKAIKLTVN. The Mitochondrial intermembrane segment spans residues 411 to 433; that stretch reads DFVRDKFTKRDGSIPLPAEILAG. A helical membrane pass occupies residues 434 to 447; the sequence is GCAGGSQVIFTNPL. Topologically, residues 448 to 482 are mitochondrial matrix; that stretch reads EIVKIRLQVAGEITTGPRVSALNVLQDLGLFGLYK. Residues 483–502 traverse the membrane as a helical segment; it reads GAKACFLRDIPFSAIYFPVY. The Mitochondrial intermembrane segment spans residues 503-521; sequence AHCKLLLADENGRVGGINL. Residues 522–539 traverse the membrane as a helical segment; it reads LTAGALAGVPAASLVTPA. The Mitochondrial matrix portion of the chain corresponds to 540-578; it reads DVIKTRLQVAARAGQTTYSGVVDCFRKILREEGPSAFWK. A helical membrane pass occupies residues 579–598; it reads GTAARVFRSSPQFGVTLVTY. Topologically, residues 599–677 are mitochondrial intermembrane; sequence ELLQRWFYID…AQPKAAAAAQ (79 aa). Residues 613 to 677 form a C-terminal domain region; it reads KPSGSEPTPK…AQPKAAAAAQ (65 aa).

This sequence belongs to the mitochondrial carrier (TC 2.A.29) family. As to quaternary structure, homodimer (via N-terminus).

It localises to the mitochondrion inner membrane. It carries out the reaction L-aspartate(in) + L-glutamate(out) + H(+)(out) = L-aspartate(out) + L-glutamate(in) + H(+)(in). The catalysed reaction is 3-sulfino-L-alanine(out) + L-glutamate(in) + H(+)(in) = 3-sulfino-L-alanine(in) + L-glutamate(out) + H(+)(out). The enzyme catalyses 3-sulfino-L-alanine(out) + L-aspartate(in) = 3-sulfino-L-alanine(in) + L-aspartate(out). Its function is as follows. Mitochondrial electrogenic aspartate/glutamate antiporter that favors efflux of aspartate and entry of glutamate and proton within the mitochondria as part of the malate-aspartate shuttle. Also mediates the uptake of L-cysteinesulfinate (3-sulfino-L-alanine) by mitochondria in exchange of L-glutamate and proton. Can also exchange L-cysteinesulfinate with aspartate in their anionic form without any proton translocation. Lacks transport activity towards L-glutamine or gamma-aminobutyric acid (GABA). The chain is Electrogenic aspartate/glutamate antiporter SLC25A12, mitochondrial from Mus musculus (Mouse).